The chain runs to 1587 residues: DNA topoisomerase 2 (1587 aa).

Residues 1–15 are compositionally biased toward acidic residues; the sequence is MSDADPFDMSDDDDN. Residues 1 to 47 are disordered; the sequence is MSDADPFDMSDDDDNSVLSHTPPKKQKKAPTTKKGGSKPLADVENES. The segment covering 22 to 31 has biased composition (basic residues); that stretch reads PPKKQKKAPT. Residues asparagine 126, asparagine 155, 183 to 185, and 196 to 203 each bind ATP; these read SSN and GRNGFGAK. Interaction with DNA regions lie at residues 381–383 and 381–386; these read KKK and KKKNKN. 415-417 contacts ATP; that stretch reads QTK. The disordered stretch occupies residues 461 to 485; that stretch reads MLKKTDGGRRSRMNNPKLTDANKAG. Residues 492 to 606 form the Toprim domain; sequence CTLILTEGDS…SLLKIPEFLI (115 aa). Glutamate 498, aspartate 575, and aspartate 577 together coordinate Mg(2+). The Topo IIA-type catalytic domain occupies 743 to 1190; it reads IPSVVDGLKP…SKEDIWKRDL (448 aa). Residue tyrosine 833 is the O-(5'-phospho-DNA)-tyrosine intermediate of the active site. The interval 1016 to 1025 is interaction with DNA; that stretch reads KLSKTMTTTN. Positions 1204-1587 are disordered; it reads EARRQRKVAN…PRPRRPRRRS (384 aa). Positions 1271 to 1280 are enriched in low complexity; it reads LSFLGKSSAK. A compositionally biased stretch (basic and acidic residues) spans 1308–1320; it reads PKSEPKADPKPKD. Acidic residues predominate over residues 1321-1334; it reads EDEDIVMEDSDIEE. The span at 1348-1364 shows a compositional bias: basic and acidic residues; that stretch reads VKPESEDGQAKIAEAPK. Residues 1365 to 1375 are compositionally biased toward basic residues; sequence RGRAAAKPKPK. Composition is skewed to acidic residues over residues 1379-1391 and 1419-1430; these read EDEEDELDDDDFM and SDSDSDNGDDLL. 2 stretches are compositionally biased toward polar residues: residues 1441–1451 and 1466–1475; these read GSTNGASTSDS and GLKTTASKAS. The segment covering 1512–1521 has biased composition (acidic residues); that stretch reads DNEPEDDDDE. The span at 1524–1542 shows a compositional bias: low complexity; the sequence is KPAAKGKAAAKGKSTAAAA. Pro residues predominate over residues 1558 to 1568; sequence PKPPPRLPCPL. Residues 1571–1587 show a composition bias toward basic residues; the sequence is RRTHRSNPRPRRPRRRS.

This sequence belongs to the type II topoisomerase family. Homodimer. The cofactor is Mg(2+). Mn(2+) is required as a cofactor. Requires Ca(2+) as cofactor.

Its subcellular location is the nucleus. It catalyses the reaction ATP-dependent breakage, passage and rejoining of double-stranded DNA.. Functionally, control of topological states of DNA by transient breakage and subsequent rejoining of DNA strands. Topoisomerase II makes double-strand breaks. This is DNA topoisomerase 2 (TOP2) from Penicillium chrysogenum (Penicillium notatum).